The following is a 524-amino-acid chain: Putative UDP-glucuronosyltransferase ugt-56 (524 aa).

A signal peptide spans 1–20; sequence MLWAFIVWLGALCIYGSAFD. Residues N125, N277, and N335 are each glycosylated (N-linked (GlcNAc...) asparagine). Residues 488-508 traverse the membrane as a helical segment; it reads LIDSSIALVFMLFIFVFVNHF.

This sequence belongs to the UDP-glycosyltransferase family.

It localises to the membrane. The catalysed reaction is glucuronate acceptor + UDP-alpha-D-glucuronate = acceptor beta-D-glucuronoside + UDP + H(+). This Caenorhabditis elegans protein is Putative UDP-glucuronosyltransferase ugt-56 (ugt-56).